The sequence spans 364 residues: MSLQSIKYSRGSLEILDQLLLPGQSKYEVVRGVEDGWKVINKMQVRGAPAIAIVGCLSLAVEINPEDFETKKSLRQEVEGKLNYLVSARPTAVNMKIAADELITLANDLYKDEAIDVNGMKQRFLDATEAMLKKDIADNRAIGANGAKAILQRVAEKGGAPAGSTGSVRVLTHCNTGSLATAGYGTALGVVRQLAELGKLEHVYCTETRPYNQGARLTAYELVHEKFPATLVLDSMVAALLRAKNVAAVVVGADRVASNGDTANKIGTYQIAVVAKHHDVPFYVAAPLTSIDLAIPGGDHIIIEERPDREMTHVGEHRIAAPGINCWNPAFDVTPASLITGIITERGVFKPAELKEAITKLLES.

Asp254 (proton donor) is an active-site residue.

The protein belongs to the eIF-2B alpha/beta/delta subunits family. MtnA subfamily.

The protein resides in the cytoplasm. It is found in the nucleus. It carries out the reaction 5-(methylsulfanyl)-alpha-D-ribose 1-phosphate = 5-(methylsulfanyl)-D-ribulose 1-phosphate. The protein operates within amino-acid biosynthesis; L-methionine biosynthesis via salvage pathway; L-methionine from S-methyl-5-thio-alpha-D-ribose 1-phosphate: step 1/6. Catalyzes the interconversion of methylthioribose-1-phosphate (MTR-1-P) into methylthioribulose-1-phosphate (MTRu-1-P). The protein is Methylthioribose-1-phosphate isomerase of Drosophila erecta (Fruit fly).